A 257-amino-acid polypeptide reads, in one-letter code: Aspartate/glutamate leucyltransferase (257 aa).

This sequence belongs to the R-transferase family. Bpt subfamily.

The protein localises to the cytoplasm. It carries out the reaction N-terminal L-glutamyl-[protein] + L-leucyl-tRNA(Leu) = N-terminal L-leucyl-L-glutamyl-[protein] + tRNA(Leu) + H(+). It catalyses the reaction N-terminal L-aspartyl-[protein] + L-leucyl-tRNA(Leu) = N-terminal L-leucyl-L-aspartyl-[protein] + tRNA(Leu) + H(+). Functions in the N-end rule pathway of protein degradation where it conjugates Leu from its aminoacyl-tRNA to the N-termini of proteins containing an N-terminal aspartate or glutamate. The protein is Aspartate/glutamate leucyltransferase of Nitrobacter hamburgensis (strain DSM 10229 / NCIMB 13809 / X14).